Reading from the N-terminus, the 141-residue chain is Nucleoside diphosphate kinase (141 aa).

Lys11, Phe59, Arg87, Thr93, Arg104, and Asn114 together coordinate ATP. The Pros-phosphohistidine intermediate role is filled by His117.

This sequence belongs to the NDK family. Homotetramer. The cofactor is Mg(2+).

It localises to the cytoplasm. It carries out the reaction a 2'-deoxyribonucleoside 5'-diphosphate + ATP = a 2'-deoxyribonucleoside 5'-triphosphate + ADP. It catalyses the reaction a ribonucleoside 5'-diphosphate + ATP = a ribonucleoside 5'-triphosphate + ADP. Functionally, major role in the synthesis of nucleoside triphosphates other than ATP. The ATP gamma phosphate is transferred to the NDP beta phosphate via a ping-pong mechanism, using a phosphorylated active-site intermediate. The sequence is that of Nucleoside diphosphate kinase from Legionella pneumophila (strain Paris).